Here is a 103-residue protein sequence, read N- to C-terminus: Alpha-ketoglutarate dehydrogenase component 4 (103 aa).

Methionine 1 carries the N-acetylmethionine modification. At lysine 5 the chain carries N6-succinyllysine. Residues 23–70 (IRFPDRRDNPKPNVSEVLRSAGLPSHTSSISQHSKGSKSPDWLMHQGP) form a disordered region. The segment covering 47-61 (SHTSSISQHSKGSKS) has biased composition (low complexity). Residues serine 61 and serine 90 each carry the phosphoserine modification.

This sequence belongs to the alpha-ketoglutarate dehydrogenase component 4 family. In terms of assembly, component of the 2-oxoglutarate dehydrogenase complex (OGDHC), composed of OGDH (2-oxoglutarate dehydrogenase; also called E1 subunit), DLST (dihydrolipoamide succinyltransferase; also called E2 subunit) and DLD (dihydrolipoamide dehydrogenase; also called E3 subunit), and the assembly factor KGD4. Within OGDHC complex, interacts (via N-terminus) with E3 subunit and (via C-terminus) with E2 subunit.

Its subcellular location is the mitochondrion. Molecular adapter that is necessary to form a stable 2-oxoglutarate dehydrogenase enzyme complex (OGDHC). Enables the specific recruitment of E3 subunit to E2 subunit in the 2-oxoglutarate dehydrogenase complex (OGDHC). This Bos taurus (Bovine) protein is Alpha-ketoglutarate dehydrogenase component 4 (KGD4).